The chain runs to 160 residues: Ribosomal RNA large subunit methyltransferase H (160 aa).

Residues Leu76 and Gly108 each contribute to the S-adenosyl-L-methionine site.

Belongs to the RNA methyltransferase RlmH family. As to quaternary structure, homodimer.

Its subcellular location is the cytoplasm. It carries out the reaction pseudouridine(1915) in 23S rRNA + S-adenosyl-L-methionine = N(3)-methylpseudouridine(1915) in 23S rRNA + S-adenosyl-L-homocysteine + H(+). Functionally, specifically methylates the pseudouridine at position 1915 (m3Psi1915) in 23S rRNA. This chain is Ribosomal RNA large subunit methyltransferase H, found in Rhodopseudomonas palustris (strain HaA2).